Here is a 189-residue protein sequence, read N- to C-terminus: dCTP deaminase (189 aa).

DCTP is bound by residues 112-117 (KSTYAR), 136-138 (TLE), Gln-157, Tyr-171, and Gln-181. The active-site Proton donor/acceptor is the Glu-138.

This sequence belongs to the dCTP deaminase family. Homotrimer.

It carries out the reaction dCTP + H2O + H(+) = dUTP + NH4(+). It participates in pyrimidine metabolism; dUMP biosynthesis; dUMP from dCTP (dUTP route): step 1/2. Catalyzes the deamination of dCTP to dUTP. This Xanthomonas axonopodis pv. citri (strain 306) protein is dCTP deaminase.